The chain runs to 304 residues: Probable 5-dehydro-4-deoxyglucarate dehydratase (304 aa).

It belongs to the DapA family.

It catalyses the reaction 5-dehydro-4-deoxy-D-glucarate + H(+) = 2,5-dioxopentanoate + CO2 + H2O. The protein operates within carbohydrate acid metabolism; D-glucarate degradation; 2,5-dioxopentanoate from D-glucarate: step 2/2. This is Probable 5-dehydro-4-deoxyglucarate dehydratase from Rhodococcus jostii (strain RHA1).